Here is a 208-residue protein sequence, read N- to C-terminus: Imidazoleglycerol-phosphate dehydratase (208 aa).

This sequence belongs to the imidazoleglycerol-phosphate dehydratase family.

It localises to the cytoplasm. The enzyme catalyses D-erythro-1-(imidazol-4-yl)glycerol 3-phosphate = 3-(imidazol-4-yl)-2-oxopropyl phosphate + H2O. Its pathway is amino-acid biosynthesis; L-histidine biosynthesis; L-histidine from 5-phospho-alpha-D-ribose 1-diphosphate: step 6/9. This is Imidazoleglycerol-phosphate dehydratase from Mycobacterium sp. (strain JLS).